The primary structure comprises 194 residues: uncharacterized protein (194 aa).

A helical transmembrane segment spans residues 17–37; the sequence is DVWLYLLVFGCLSVLVLVLVH.

Belongs to the IIV-6 307L family.

The protein localises to the membrane. This is an uncharacterized protein from Invertebrate iridescent virus 3 (IIV-3).